A 324-amino-acid polypeptide reads, in one-letter code: Probable RuBisCO transcriptional regulator (324 aa).

The HTH lysR-type domain occupies 8-65 (FSLEQLRILKAIATEGSFKKAAESLYMTQPAISLQIQTLEKKLNIALFDRSGRRALMT). A DNA-binding region (H-T-H motif) is located at residues 25–44 (FKKAAESLYMTQPAISLQIQ).

This sequence belongs to the LysR transcriptional regulatory family.

It is found in the plastid. It localises to the cyanelle. In terms of biological role, trans-acting transcriptional regulator of RuBisCO genes (rbcL and rbcS) expression. The polypeptide is Probable RuBisCO transcriptional regulator (rbcR) (Cyanophora paradoxa).